The chain runs to 333 residues: Transcription initiation factor IIB (333 aa).

A TFIIB-type zinc finger spans residues 33–64 (EVYRCPICGNDKFIYNYERGEVVCIVCGAVVQ). Cys-37, Cys-40, Cys-56, and Cys-59 together coordinate Zn(2+). Tandem repeats lie at residues 149–232 (QELE…LREL) and 243–324 (LYIS…ELAK).

The protein belongs to the TFIIB family.

Functionally, stabilizes TBP binding to an archaeal box-A promoter. Also responsible for recruiting RNA polymerase II to the pre-initiation complex (DNA-TBP-TFIIB). This is Transcription initiation factor IIB from Pyrobaculum neutrophilum (strain DSM 2338 / JCM 9278 / NBRC 100436 / V24Sta) (Thermoproteus neutrophilus).